Reading from the N-terminus, the 419-residue chain is Imidazolonepropionase (419 aa).

The Fe(3+) site is built by His84 and His86. His84 and His86 together coordinate Zn(2+). 4-imidazolone-5-propanoate contacts are provided by Arg93, Tyr156, and His189. Position 156 (Tyr156) interacts with N-formimidoyl-L-glutamate. Position 254 (His254) interacts with Fe(3+). Position 254 (His254) interacts with Zn(2+). Position 257 (Gln257) interacts with 4-imidazolone-5-propanoate. Asp329 is a Fe(3+) binding site. Asp329 is a binding site for Zn(2+). The N-formimidoyl-L-glutamate site is built by Asn331 and Gly333. Thr334 is a 4-imidazolone-5-propanoate binding site.

Belongs to the metallo-dependent hydrolases superfamily. HutI family. In terms of assembly, monomer. Forms a tightly packed homodimer in the crystal, but this seems to be an artifact of crystallization. The cofactor is Zn(2+). It depends on Fe(3+) as a cofactor.

It localises to the cytoplasm. The enzyme catalyses 4-imidazolone-5-propanoate + H2O = N-formimidoyl-L-glutamate. It participates in amino-acid degradation; L-histidine degradation into L-glutamate; N-formimidoyl-L-glutamate from L-histidine: step 3/3. Its function is as follows. Catalyzes the hydrolytic cleavage of the carbon-nitrogen bond in imidazolone-5-propanoate to yield N-formimidoyl-L-glutamate. It is the third step in the universal histidine degradation pathway. The polypeptide is Imidazolonepropionase (Agrobacterium fabrum (strain C58 / ATCC 33970) (Agrobacterium tumefaciens (strain C58))).